The sequence spans 394 residues: 3-amino-4-hydroxybenzoate 2-monooxygenase (394 aa).

Residues Ala-16 and Arg-109 each coordinate FAD. Tyr-214 (proton acceptor) is an active-site residue. Asp-287 serves as a coordination point for FAD.

Belongs to the 6-hydroxynicotinate 3-monooxygenase family. It depends on FAD as a cofactor.

The enzyme catalyses 3-amino-4-hydroxybenzoate + NADPH + O2 + H(+) = 3-amino-2,4-dihydroxybenzoate + NADP(+) + H2O. Its pathway is antibiotic biosynthesis. Part of a gene cluster involved in the biosynthesis of cremeomycin, a light-sensitive o-diazoquinone with antibacterial and antiproliferative effects. Catalyzes the hydroxylation of 3-amino-4-hydroxybenzoate (3,4-AHBA) to 3-amino-2,4-dihydroxybenzoate (3,2,4-ADHBA). The sequence is that of 3-amino-4-hydroxybenzoate 2-monooxygenase from Streptomyces cremeus.